Reading from the N-terminus, the 297-residue chain is ATP phosphoribosyltransferase (297 aa).

Belongs to the ATP phosphoribosyltransferase family.

Its subcellular location is the cytoplasm. The catalysed reaction is 1-(5-phospho-beta-D-ribosyl)-ATP + diphosphate = 5-phospho-alpha-D-ribose 1-diphosphate + ATP. Its pathway is amino-acid biosynthesis; L-histidine biosynthesis; L-histidine from 5-phospho-alpha-D-ribose 1-diphosphate: step 1/9. In terms of biological role, catalyzes the condensation of ATP and 5-phosphoribose 1-diphosphate to form N'-(5'-phosphoribosyl)-ATP (PR-ATP). Has a crucial role in the pathway because the rate of histidine biosynthesis seems to be controlled primarily by regulation of the enzymatic activity. The chain is ATP phosphoribosyltransferase (HIS1) from Kluyveromyces lactis (strain ATCC 8585 / CBS 2359 / DSM 70799 / NBRC 1267 / NRRL Y-1140 / WM37) (Yeast).